The following is a 159-amino-acid chain: RNA pyrophosphohydrolase (159 aa).

The region spanning 6-149 is the Nudix hydrolase domain; the sequence is GFRPNVGIIL…KREVYRRALK (144 aa). A Nudix box motif is present at residues 38–59; it reads GGINDRETPEEALYRELNEEVG.

Belongs to the Nudix hydrolase family. RppH subfamily. A divalent metal cation is required as a cofactor.

Its function is as follows. Accelerates the degradation of transcripts by removing pyrophosphate from the 5'-end of triphosphorylated RNA, leading to a more labile monophosphorylated state that can stimulate subsequent ribonuclease cleavage. The protein is RNA pyrophosphohydrolase of Pseudomonas aeruginosa (strain LESB58).